Reading from the N-terminus, the 92-residue chain is UPF0358 protein SH1840 (92 aa).

Belongs to the UPF0358 family.

This chain is UPF0358 protein SH1840, found in Staphylococcus haemolyticus (strain JCSC1435).